The primary structure comprises 628 residues: F-box only protein 21 (628 aa).

The region spanning 28–84 (SCLVNLPGEVLEYILCCGSLTAADIGRVSSTCRRLRELCQSSGKVWKEQFRVRWPSL) is the F-box domain.

In terms of assembly, directly interacts with SKP1 and CUL1.

Functionally, substrate-recognition component of the SCF (SKP1-CUL1-F-box protein)-type E3 ubiquitin ligase complex. In Homo sapiens (Human), this protein is F-box only protein 21 (FBXO21).